The chain runs to 237 residues: Keratin-associated protein 5-5 (237 aa).

Repeat copies occupy residues 62–65 (CCVP), 68–71 (CCKP), 74–77 (CCVP), 159–162 (CCKP), 178–181 (CCKP), 188–191 (CCKP), 198–201 (CCKP), and 227–230 (CCVP). Residues 62–230 (CCVPVCCCKP…CCCQSSCCVP (169 aa)) are 8 X 4 AA repeats of C-C-X-P.

Belongs to the KRTAP type 5 family. As to quaternary structure, interacts with hair keratins. In terms of tissue distribution, restricted to hair root, not detected in any other tissues.

In the hair cortex, hair keratin intermediate filaments are embedded in an interfilamentous matrix, consisting of hair keratin-associated protein (KRTAP), which are essential for the formation of a rigid and resistant hair shaft through their extensive disulfide bond cross-linking with abundant cysteine residues of hair keratins. The matrix proteins include the high-sulfur and high-glycine-tyrosine keratins. The protein is Keratin-associated protein 5-5 (KRTAP5-5) of Homo sapiens (Human).